The following is a 412-amino-acid chain: Peptidase T (412 aa).

Residue H78 participates in Zn(2+) binding. D80 is an active-site residue. D140 is a Zn(2+) binding site. E173 (proton acceptor) is an active-site residue. Residues E174, D196, and H379 each contribute to the Zn(2+) site.

This sequence belongs to the peptidase M20B family. Requires Zn(2+) as cofactor.

It is found in the cytoplasm. It carries out the reaction Release of the N-terminal residue from a tripeptide.. Functionally, cleaves the N-terminal amino acid of tripeptides. The polypeptide is Peptidase T (Edwardsiella ictaluri (strain 93-146)).